We begin with the raw amino-acid sequence, 409 residues long: Phosphopentomutase (409 aa).

Mn(2+) contacts are provided by Asp-10, Asp-302, His-307, Asp-343, His-344, and His-355.

It belongs to the phosphopentomutase family. It depends on Mn(2+) as a cofactor.

Its subcellular location is the cytoplasm. It carries out the reaction 2-deoxy-alpha-D-ribose 1-phosphate = 2-deoxy-D-ribose 5-phosphate. The catalysed reaction is alpha-D-ribose 1-phosphate = D-ribose 5-phosphate. It functions in the pathway carbohydrate degradation; 2-deoxy-D-ribose 1-phosphate degradation; D-glyceraldehyde 3-phosphate and acetaldehyde from 2-deoxy-alpha-D-ribose 1-phosphate: step 1/2. Functionally, isomerase that catalyzes the conversion of deoxy-ribose 1-phosphate (dRib-1-P) and ribose 1-phosphate (Rib-1-P) to deoxy-ribose 5-phosphate (dRib-5-P) and ribose 5-phosphate (Rib-5-P), respectively. This chain is Phosphopentomutase, found in Chelativorans sp. (strain BNC1).